We begin with the raw amino-acid sequence, 397 residues long: Succinyl-diaminopimelate desuccinylase (397 aa).

H73 provides a ligand contact to Zn(2+). D75 is a catalytic residue. D106 contacts Zn(2+). The active-site Proton acceptor is E140. Zn(2+)-binding residues include E141, E169, and H366.

This sequence belongs to the peptidase M20A family. DapE subfamily. Homodimer. It depends on Zn(2+) as a cofactor. Co(2+) is required as a cofactor.

The catalysed reaction is N-succinyl-(2S,6S)-2,6-diaminopimelate + H2O = (2S,6S)-2,6-diaminopimelate + succinate. The protein operates within amino-acid biosynthesis; L-lysine biosynthesis via DAP pathway; LL-2,6-diaminopimelate from (S)-tetrahydrodipicolinate (succinylase route): step 3/3. Functionally, catalyzes the hydrolysis of N-succinyl-L,L-diaminopimelic acid (SDAP), forming succinate and LL-2,6-diaminopimelate (DAP), an intermediate involved in the bacterial biosynthesis of lysine and meso-diaminopimelic acid, an essential component of bacterial cell walls. The sequence is that of Succinyl-diaminopimelate desuccinylase from Rhizobium rhizogenes (strain K84 / ATCC BAA-868) (Agrobacterium radiobacter).